A 435-amino-acid chain; its full sequence is MFILTMGLNHHTAPIDIREKLVFKESEEEMALVTLQQEKSILENVIISTCNRTEIIAVVDQIHTGRYYLKRFMANWFQMDMEKIEPYLFFHEESDAVNHLYKVTAGLDSLVLGETQILGQVKHAFEIAKQTATTGTLLNKLFREVVTFAKKVHHHTKINENAVSVSYAAVEVAKKLYGSLDNKKIVLVGAGEMSELALQNLAGSGIADITIINRTKSNAELLANQFQAKVGAYENMNEHLMLADIVLVSTSAAEPIIKQAAMQDLMEQKASSMLVIDIGLPRNVEHDCSYIPNFHLYDIDDLAGVVSANSLERQRIVLELEKTIEAEVRNFFEWEKQLGVVPVIRALREKALDMQEVTMTSLENKLPGLTEREYIQIGKHMKSIINQMLKQPISELKEMSVEEDATTSIEHFKRIFGLSETDVTVIEKEQAETRS.

Residues 49–52, serine 109, 114–116, and glutamine 120 contribute to the substrate site; these read TCNR and ETQ. The active-site Nucleophile is the cysteine 50. Position 189–194 (189–194) interacts with NADP(+); it reads GAGEMS.

The protein belongs to the glutamyl-tRNA reductase family. Homodimer.

It catalyses the reaction (S)-4-amino-5-oxopentanoate + tRNA(Glu) + NADP(+) = L-glutamyl-tRNA(Glu) + NADPH + H(+). Its pathway is porphyrin-containing compound metabolism; protoporphyrin-IX biosynthesis; 5-aminolevulinate from L-glutamyl-tRNA(Glu): step 1/2. Functionally, catalyzes the NADPH-dependent reduction of glutamyl-tRNA(Glu) to glutamate 1-semialdehyde (GSA). The polypeptide is Glutamyl-tRNA reductase (Listeria monocytogenes serotype 4b (strain CLIP80459)).